The following is a 474-amino-acid chain: tRNA modification GTPase MnmE (474 aa).

Residues Arg23, Glu86, and Lys125 each coordinate (6S)-5-formyl-5,6,7,8-tetrahydrofolate. The 176-residue stretch at 221–396 (GIPVAIVGEP…LKEKLLEYVN (176 aa)) folds into the TrmE-type G domain. K(+) is bound at residue Asn231. GTP is bound by residues 231–236 (NVGKST), 250–256 (SEIAGTT), and 275–278 (DTAG). Ser235 lines the Mg(2+) pocket. Residues Ser250, Ile252, and Thr255 each coordinate K(+). Thr256 lines the Mg(2+) pocket. Position 474 (Lys474) interacts with (6S)-5-formyl-5,6,7,8-tetrahydrofolate.

It belongs to the TRAFAC class TrmE-Era-EngA-EngB-Septin-like GTPase superfamily. TrmE GTPase family. In terms of assembly, homodimer. Heterotetramer of two MnmE and two MnmG subunits. K(+) serves as cofactor.

Its subcellular location is the cytoplasm. In terms of biological role, exhibits a very high intrinsic GTPase hydrolysis rate. Involved in the addition of a carboxymethylaminomethyl (cmnm) group at the wobble position (U34) of certain tRNAs, forming tRNA-cmnm(5)s(2)U34. This Christiangramia forsetii (strain DSM 17595 / CGMCC 1.15422 / KT0803) (Gramella forsetii) protein is tRNA modification GTPase MnmE.